Reading from the N-terminus, the 133-residue chain is Putative biopolymer transport protein ExbD-like 1 (133 aa).

Residues 1-15 (MNYDNYWDEDKPELN) are Cytoplasmic-facing. A helical transmembrane segment spans residues 16–32 (ITPLVDVMLVLLAILMV). Residues 33-133 (TTPTLTYKEE…FLKVSLITSP (101 aa)) are Periplasmic-facing.

This sequence belongs to the ExbD/TolR family.

Its subcellular location is the cell inner membrane. The polypeptide is Putative biopolymer transport protein ExbD-like 1 (Helicobacter pylori (strain J99 / ATCC 700824) (Campylobacter pylori J99)).